The primary structure comprises 124 residues: MAEVKDQLEIKFRLNDGSDIGPKLFPDATTVATLKETVVAQWPRDKENGPKTVKDVKLISAGRILENNKTVGDCRSPVGNFSGAVTTMHVIIQHQVTEKEKKKKKPKGDLKQNKCVCLCFGARC.

In terms of domain architecture, Ubiquitin-like spans 8–74 (LEIKFRLNDG…LENNKTVGDC (67 aa)). S-palmitoyl cysteine attachment occurs at residues C115, C117, C119, and C124.

Post-translationally, acylated protein. Probably modified with palmitate. As to expression, ubiquitous, but three fold higher expression in stamens.

The protein localises to the cell membrane. Functionally, may serve as docking site to facilitate the association of other proteins to the plasma membrane. In Arabidopsis thaliana (Mouse-ear cress), this protein is Membrane-anchored ubiquitin-fold protein 2 (MUB2).